Reading from the N-terminus, the 756-residue chain is Protein psiP (756 aa).

Residues 1 to 23 form the signal peptide; sequence MFIQRTFLKVLTLLSIVTVLVHG. At 24 to 692 the chain is on the extracellular side; that stretch reads QTQPKDKITL…NCNTGAVVST (669 aa). Asparagine 82 is a glycosylation site (N-linked (GlcNAc...) asparagine). The 156-residue stretch at 126–281 folds into the PA14 domain; sequence LNWNGEAYEY…VDYCGVCEGD (156 aa). N-linked (GlcNAc...) asparagine glycosylation is found at asparagine 359, asparagine 483, asparagine 564, and asparagine 663. A helical transmembrane segment spans residues 693–713; the sequence is AVIAGSTVAGAVALGIFLYGG. Over 714-756 the chain is Cytoplasmic; it reads KKGYDYWKDSRNISMGSSNSNPLYEEQQTGRGVNPMYDDPAAN. The segment covering 730–744 has biased composition (polar residues); that stretch reads SSNSNPLYEEQQTGR. The interval 730 to 756 is disordered; it reads SSNSNPLYEEQQTGRGVNPMYDDPAAN.

The protein belongs to the prespore-cell-inducing factor family.

The protein localises to the membrane. The polypeptide is Protein psiP (psiP) (Dictyostelium discoideum (Social amoeba)).